Consider the following 320-residue polypeptide: Endolytic peptidoglycan transglycosylase RlpA (320 aa).

The protein belongs to the RlpA family.

Its function is as follows. Lytic transglycosylase with a strong preference for naked glycan strands that lack stem peptides. The sequence is that of Endolytic peptidoglycan transglycosylase RlpA from Rickettsia prowazekii (strain Madrid E).